Consider the following 226-residue polypeptide: MEPIKNLPRLCRTLSYEFKNIELLTQALTHRSAANKHNERLEFLGDSILSIVISDALYHQFPKATEGDLSRMRATLVRGDTLTIIAQEFKLGDYLYLGPGELKSGGFRRESILADAVEAIIGAVYLDSDLEVCRALLLKWYAERLAEIQPGISQKDAKTLLQEHLQGFKKPLPDYQVINIEGDAHDQTFTVECRIEDLSQSVIGVASSRRKAEQIAAAQVLELLKK.

The RNase III domain occupies 7–129 (LPRLCRTLSY…IIGAVYLDSD (123 aa)). Residue glutamate 42 coordinates Mg(2+). The active site involves aspartate 46. Positions 115 and 118 each coordinate Mg(2+). Glutamate 118 is an active-site residue. Positions 156–226 (DAKTLLQEHL…AAQVLELLKK (71 aa)) constitute a DRBM domain.

This sequence belongs to the ribonuclease III family. As to quaternary structure, homodimer. Requires Mg(2+) as cofactor.

It localises to the cytoplasm. The enzyme catalyses Endonucleolytic cleavage to 5'-phosphomonoester.. In terms of biological role, digests double-stranded RNA. Involved in the processing of primary rRNA transcript to yield the immediate precursors to the large and small rRNAs (23S and 16S). Processes some mRNAs, and tRNAs when they are encoded in the rRNA operon. Processes pre-crRNA and tracrRNA of type II CRISPR loci if present in the organism. The chain is Ribonuclease 3 from Shewanella baltica (strain OS223).